The chain runs to 321 residues: Serpentine receptor class delta-63 (321 aa).

7 helical membrane-spanning segments follow: residues 14–34 (LVYMICLMLYITMYILIYNFT), 41–61 (VKYFLYPSCTAMLIAMTMAFA), 83–103 (YIGPTFCFYCYNLYTAFGIVV), 128–148 (LWTLVFMWHYLCPLIYLIVII), 190–208 (AAMSLSLISMYYPLIGTYW), 240–260 (NFQILLPMLRYIPLTAIYFMI), and 273–293 (TITVLGTIPCILDPLVQIYFI).

This sequence belongs to the nematode receptor-like protein srd family.

It is found in the membrane. This is Serpentine receptor class delta-63 (srd-63) from Caenorhabditis elegans.